A 101-amino-acid chain; its full sequence is Urease subunit beta (101 aa).

Belongs to the urease beta subunit family. Heterotrimer of UreA (gamma), UreB (beta) and UreC (alpha) subunits. Three heterotrimers associate to form the active enzyme.

The protein localises to the cytoplasm. It catalyses the reaction urea + 2 H2O + H(+) = hydrogencarbonate + 2 NH4(+). Its pathway is nitrogen metabolism; urea degradation; CO(2) and NH(3) from urea (urease route): step 1/1. This chain is Urease subunit beta, found in Polaromonas naphthalenivorans (strain CJ2).